We begin with the raw amino-acid sequence, 85 residues long: uncharacterized protein (85 aa).

Helical transmembrane passes span Ile12–Phe34 and Ile49–Val71.

It is found in the cell membrane. This is an uncharacterized protein from Archaeoglobus fulgidus (strain ATCC 49558 / DSM 4304 / JCM 9628 / NBRC 100126 / VC-16).